A 576-amino-acid chain; its full sequence is MAGUK p55 subfamily member 7 (576 aa).

L27 domains follow at residues 10-63 and 65-122; these read SDTG…YEKE and PMPV…YDPV. The PDZ domain maps to 139–220; sequence IIRLVKNREP…AITFKIIPSI (82 aa). Positions 228–298 constitute an SH3 domain; sequence DGKMFVKALF…PSKQFQERRF (71 aa). The Guanylate kinase-like domain occupies 368–560; that stretch reads YRLVILVGPV…AYNELRSTLE (193 aa).

This sequence belongs to the MAGUK family.

The protein resides in the membrane. The protein localises to the cell junction. Its subcellular location is the tight junction. It localises to the adherens junction. Functionally, acts as an important adapter that promotes epithelial cell polarity and tight junction formation. Involved in the assembly of protein complexes at sites of cell-cell contact. This chain is MAGUK p55 subfamily member 7 (mpp7), found in Xenopus tropicalis (Western clawed frog).